A 238-amino-acid polypeptide reads, in one-letter code: Demethylmenaquinone methyltransferase (238 aa).

Residues threonine 65, aspartate 85, and 109–110 contribute to the S-adenosyl-L-methionine site; that span reads DA.

Belongs to the class I-like SAM-binding methyltransferase superfamily. MenG/UbiE family.

The catalysed reaction is a 2-demethylmenaquinol + S-adenosyl-L-methionine = a menaquinol + S-adenosyl-L-homocysteine + H(+). It participates in quinol/quinone metabolism; menaquinone biosynthesis; menaquinol from 1,4-dihydroxy-2-naphthoate: step 2/2. Its function is as follows. Methyltransferase required for the conversion of demethylmenaquinol (DMKH2) to menaquinol (MKH2). This chain is Demethylmenaquinone methyltransferase, found in Roseiflexus sp. (strain RS-1).